We begin with the raw amino-acid sequence, 121 residues long: UPF0102 protein Dhaf_3740 (121 aa).

This sequence belongs to the UPF0102 family.

This Desulfitobacterium hafniense (strain DSM 10664 / DCB-2) protein is UPF0102 protein Dhaf_3740.